The chain runs to 448 residues: Ribosomal protein uS12 methylthiotransferase RimO (448 aa).

An MTTase N-terminal domain is found at 10-120 (PNIGFVSLGC…VMEHVHKYVP (111 aa)). Positions 19, 55, 84, 152, 156, and 159 each coordinate [4Fe-4S] cluster. The Radical SAM core domain maps to 138–379 (LTPKHYAYLK…MELQQQISAQ (242 aa)). One can recognise a TRAM domain in the interval 382-448 (QQKIGKTLPV…ADEYDLWGTC (67 aa)).

This sequence belongs to the methylthiotransferase family. RimO subfamily. It depends on [4Fe-4S] cluster as a cofactor.

The protein localises to the cytoplasm. The enzyme catalyses L-aspartate(89)-[ribosomal protein uS12]-hydrogen + (sulfur carrier)-SH + AH2 + 2 S-adenosyl-L-methionine = 3-methylsulfanyl-L-aspartate(89)-[ribosomal protein uS12]-hydrogen + (sulfur carrier)-H + 5'-deoxyadenosine + L-methionine + A + S-adenosyl-L-homocysteine + 2 H(+). Catalyzes the methylthiolation of an aspartic acid residue of ribosomal protein uS12. The protein is Ribosomal protein uS12 methylthiotransferase RimO of Mannheimia succiniciproducens (strain KCTC 0769BP / MBEL55E).